The primary structure comprises 120 residues: Ribonuclease P protein component (120 aa).

This sequence belongs to the RnpA family. In terms of assembly, consists of a catalytic RNA component (M1 or rnpB) and a protein subunit.

It catalyses the reaction Endonucleolytic cleavage of RNA, removing 5'-extranucleotides from tRNA precursor.. RNaseP catalyzes the removal of the 5'-leader sequence from pre-tRNA to produce the mature 5'-terminus. It can also cleave other RNA substrates such as 4.5S RNA. The protein component plays an auxiliary but essential role in vivo by binding to the 5'-leader sequence and broadening the substrate specificity of the ribozyme. This is Ribonuclease P protein component from Chlamydia trachomatis serovar A (strain ATCC VR-571B / DSM 19440 / HAR-13).